A 164-amino-acid polypeptide reads, in one-letter code: F-box protein At4g05010 (164 aa).

The disordered stretch occupies residues serine 38–threonine 57. One can recognise an F-box domain in the interval arginine 61 to serine 109.

This is F-box protein At4g05010 from Arabidopsis thaliana (Mouse-ear cress).